Here is a 390-residue protein sequence, read N- to C-terminus: Mannitol-1-phosphate 5-dehydrogenase (390 aa).

NAD(+) is bound at residue 7–18 (AVHFGGGNIGRG). Residue Lys216 is part of the active site.

Belongs to the mannitol dehydrogenase family. Monomer.

It carries out the reaction D-mannitol 1-phosphate + NAD(+) = beta-D-fructose 6-phosphate + NADH + H(+). Its function is as follows. Catalyzes the NAD(H)-dependent interconversion of D-fructose 6-phosphate and D-mannitol 1-phosphate in the mannitol metabolic pathway. Has a strong preference for NADH over NADPH. In Alternaria alternata (Alternaria rot fungus), this protein is Mannitol-1-phosphate 5-dehydrogenase.